Reading from the N-terminus, the 248-residue chain is Ureidoacrylate amidohydrolase RutB (248 aa).

Catalysis depends on Asp41, which acts as the Proton acceptor. Lys150 is an active-site residue. The active-site Nucleophile is the Cys183.

Belongs to the isochorismatase family. RutB subfamily.

The catalysed reaction is (Z)-3-ureidoacrylate + H2O + H(+) = (Z)-3-aminoacrylate + NH4(+) + CO2. It carries out the reaction (Z)-3-ureidoacrylate + H2O = (Z)-3-aminoacrylate + carbamate + H(+). It catalyses the reaction (Z)-2-methylureidoacrylate + H2O + H(+) = (Z)-2-methylaminoacrylate + NH4(+) + CO2. Functionally, hydrolyzes ureidoacrylate to form aminoacrylate and carbamate. The carbamate hydrolyzes spontaneously, thereby releasing one of the nitrogen atoms of the pyrimidine ring as ammonia and one of its carbon atoms as CO2. In Methylorubrum extorquens (strain CM4 / NCIMB 13688) (Methylobacterium extorquens), this protein is Ureidoacrylate amidohydrolase RutB.